The following is a 79-amino-acid chain: Conotoxin LiCr173 (79 aa).

Residues Met1–Ser20 form the signal peptide. Residues His21–Arg46 constitute a propeptide that is removed on maturation. Cystine bridges form between Cys52–Cys64, Cys56–Cys73, and Cys63–Cys77. Position 78 is a phenylalanine amide (Phe78).

This sequence belongs to the conotoxin O3 superfamily. In terms of tissue distribution, expressed by the venom duct.

It is found in the secreted. The chain is Conotoxin LiCr173 from Conus lividus (Livid cone).